We begin with the raw amino-acid sequence, 234 residues long: MMAIQNREEFLLQLSEKLGRKRPEAVEKPKWSFSPQWNVFDGLAQDELVLQLMEHCEVIHTEVKRTTKENLVETLGSLIKEWNIKSAMYSNDERFNEYGLTSCFNNEGTTHFRAWGLGDKEEDIKFAKAADLGITFSDMTLAESGTVVLFNDGLKGRHVSLLPESYIAIVPKSTIVPRLTQATKLIHNQSKAGENLPACVNFVSGPSNSADIEMNLVVGVHGPIRTAYIIVDDQ.

Belongs to the LutC/YkgG family.

Is involved in L-lactate degradation and allows cells to grow with lactate as the sole carbon source. This Bacillus mycoides (strain KBAB4) (Bacillus weihenstephanensis) protein is Lactate utilization protein C 1.